The primary structure comprises 746 residues: Protein psiN (746 aa).

The signal sequence occupies residues 1–23; that stretch reads MGNINKKLFYFLIQLITILIVLS. Over 24–679 the chain is Extracellular; sequence DDSYNSLLPL…KCQSAAVKAA (656 aa). Residues Asn-97 and Asn-124 are each glycosylated (N-linked (GlcNAc...) asparagine). In terms of domain architecture, PA14 spans 125–276; sequence VTSDDPRIYS…YDYCGVCEGM (152 aa). Residues Asn-319, Asn-353, Asn-380, Asn-477, Asn-553, Asn-628, and Asn-654 are each glycosylated (N-linked (GlcNAc...) asparagine). A helical membrane pass occupies residues 680-700; sequence VGVGAGAAAGIAIGGAIALGL. Residues 701–746 lie on the Cytoplasmic side of the membrane; the sequence is AAFGGKRGYDAWKSSRDNQIQTSSENPLYNPNPNQGDNPLYAANNS. The interval 714–746 is disordered; the sequence is SSRDNQIQTSSENPLYNPNPNQGDNPLYAANNS. Polar residues predominate over residues 717 to 746; sequence DNQIQTSSENPLYNPNPNQGDNPLYAANNS.

Belongs to the prespore-cell-inducing factor family.

Its subcellular location is the membrane. This Dictyostelium discoideum (Social amoeba) protein is Protein psiN (psiN).